A 503-amino-acid chain; its full sequence is Putative aldehyde dehydrogenase-like protein C9E9.09c (503 aa).

247–252 is a binding site for NAD(+); it reads GSTGVG. The residue at position 248 (Ser-248) is a Phosphoserine. Glu-270 functions as the Proton acceptor in the catalytic mechanism. Catalysis depends on Cys-304, which acts as the Nucleophile. Phosphoserine is present on Ser-501.

Belongs to the aldehyde dehydrogenase family.

The protein is Putative aldehyde dehydrogenase-like protein C9E9.09c of Schizosaccharomyces pombe (strain 972 / ATCC 24843) (Fission yeast).